We begin with the raw amino-acid sequence, 307 residues long: 2,4-diacetylphloroglucinol hydrolase (307 aa).

Zn(2+)-binding residues include His-142, Glu-173, His-283, and Glu-287.

The protein belongs to the DAPG/phloretin hydrolase family. The cofactor is Zn(2+).

The catalysed reaction is 2,4-diacetylphloroglucinol + H2O = 2-acetylphloroglucinol + acetate. Activity is strongly reduced by pyoluteorin, an antifungal compound produced by the bacterium. In terms of biological role, hydrolase that specifically degrades the potent antimicrobial compound 2,4-diacetylphloroglucinol (DAPG) to equimolar amounts of mildly toxic monoacetylphloroglucinol (MAPG) and acetate. Does not degrade other compounds with structures similar to DAPG, such as MAPG and triacetylphloroglucinol, suggesting strict substrate specificity. Degradation of DAPG to MAPG may provide an additional means of fine-tuning levels of this antibiotic or may help avoid accumulation of a metabolite that at high levels may become toxic to the producing bacterium. The chain is 2,4-diacetylphloroglucinol hydrolase from Pseudomonas protegens (strain DSM 19095 / LMG 27888 / CFBP 6595 / CHA0).